Here is a 359-residue protein sequence, read N- to C-terminus: ELAV-like protein 2 (359 aa).

The segment at 1-33 (METQLSNGPTCNNTANGPTTINNNCSSPVDSGN) is disordered. 2 consecutive RRM domains span residues 39-117 (TNLI…YARP) and 125-205 (ANLY…FANN). Residue serine 221 is modified to Phosphoserine. In terms of domain architecture, RRM 3 spans 276-354 (WCIFVYNLAP…RVLQVSFKTN (79 aa)).

The protein belongs to the RRM elav family. Interacts with IGF2BP1. Interacts with MAP1B light chain LC1.

Its function is as follows. RNA-binding protein that binds to the 3' untranslated region (3'UTR) of target mRNAs. Seems to recognize a GAAA motif. Can bind to its own 3'UTR, the FOS 3'UTR and the ID 3'UTR. In Pongo abelii (Sumatran orangutan), this protein is ELAV-like protein 2 (ELAVL2).